The primary structure comprises 85 residues: Small ribosomal subunit protein uS17 (85 aa).

This sequence belongs to the universal ribosomal protein uS17 family. Part of the 30S ribosomal subunit.

In terms of biological role, one of the primary rRNA binding proteins, it binds specifically to the 5'-end of 16S ribosomal RNA. This is Small ribosomal subunit protein uS17 from Pseudoalteromonas translucida (strain TAC 125).